Consider the following 236-residue polypeptide: Small ribosomal subunit protein uS2c (236 aa).

Belongs to the universal ribosomal protein uS2 family.

It is found in the plastid. It localises to the chloroplast. The sequence is that of Small ribosomal subunit protein uS2c (rps2) from Oenothera parviflora (Small-flowered evening primrose).